Reading from the N-terminus, the 131-residue chain is Small ribosomal subunit protein uS11 (131 aa).

This sequence belongs to the universal ribosomal protein uS11 family. Part of the 30S ribosomal subunit. Interacts with proteins S7 and S18. Binds to IF-3.

Functionally, located on the platform of the 30S subunit, it bridges several disparate RNA helices of the 16S rRNA. Forms part of the Shine-Dalgarno cleft in the 70S ribosome. The sequence is that of Small ribosomal subunit protein uS11 from Deinococcus geothermalis (strain DSM 11300 / CIP 105573 / AG-3a).